The following is a 541-amino-acid chain: Cytochrome P450 monooxygenase claU (541 aa).

A helical transmembrane segment spans residues 12–32; the sequence is VIDTLVILFSTWAFLGLIRVI. Position 480 (cysteine 480) interacts with heme.

Belongs to the cytochrome P450 family. Heme is required as a cofactor.

Its subcellular location is the membrane. It functions in the pathway secondary metabolite biosynthesis; terpenoid biosynthesis. Functionally, cytochrome P450 monooxygenase; part of the gene cluster that mediates the biosynthesis of clavilactone A, a meroterpenoid that features a unique benzo-fused ten-membered carbocyclic ring unit with an alpha,beta-epoxy-gamma-lactone moiety, forming an intriguing 10/5/3 tricyclic nested skeleton. Cytochrome P450 monooxygenases claO, claP, claQ, claU, and claW are close orthologs, suggesting that a redundant function or pseudogenes are present in the cla cluster. These monoxygenases are not involved in clavilactone A biosynthesis nor its modification. ClaR, ClaS and ClaT are sufficient to produce clavilactone A. The biosynthesis begins with the prenyltransferase claS that transfers geranyl pyrophosphate (GPP) to hydroquinone to produces geranylhydroquinone. The cytochrome P450 monooxygenase claR then catalyzes the diradical coupling reaction between the intramolecular hydroquinone and allyl moieties to form the benzo-fused ten-membered carbocyclic ring unit of wigantol. Finally the cytochrome P450 monooxygenase claT exquisitely and stereoselectively assembles the alpha,beta-epoxy-gamma-lactone moiety, producing clavilactone A via arnebinol A. In Ampulloclitocybe clavipes (Club foot), this protein is Cytochrome P450 monooxygenase claU.